A 372-amino-acid polypeptide reads, in one-letter code: Cytochrome b (372 aa).

4 consecutive transmembrane segments (helical) span residues 25 to 45 (FGSMLLACLMLQIMTGFFLAI), 69 to 90 (WIMQNLHTISASLFFICIYTHI), 105 to 125 (WLSGTALLVTLMATAFFGYVL), and 170 to 190 (FFALHFILPFIIISLSSVHII). Positions 75 and 89 each coordinate heme b. Heme b contacts are provided by His174 and His188. Residue His193 participates in a ubiquinone binding. The next 4 membrane-spanning stretches (helical) occupy residues 218 to 238 (YKDMLMITSMITLLLLILSFS), 280 to 300 (LGGTLALLLSVMILTTTPFTH), 312 to 332 (LSQILFWTLIATFITITWTAS), and 339 to 358 (FITISQTTSIFYFSFFILTP).

It belongs to the cytochrome b family. In terms of assembly, the cytochrome bc1 complex contains 3 respiratory subunits (MT-CYB, CYC1 and UQCRFS1), 2 core proteins (UQCRC1 and UQCRC2) and probably 6 low-molecular weight proteins. Requires heme b as cofactor.

It is found in the mitochondrion inner membrane. Its function is as follows. Component of the ubiquinol-cytochrome c reductase complex (complex III or cytochrome b-c1 complex) that is part of the mitochondrial respiratory chain. The b-c1 complex mediates electron transfer from ubiquinol to cytochrome c. Contributes to the generation of a proton gradient across the mitochondrial membrane that is then used for ATP synthesis. The polypeptide is Cytochrome b (MT-CYB) (Naja kaouthia (Monocled cobra)).